A 1000-amino-acid polypeptide reads, in one-letter code: Peroxisomal ATPase PEX6 (1000 aa).

An ATP-binding site is contributed by 742–749 (GPPGTGKT).

Belongs to the AAA ATPase family. Interacts with PEX1; forming the PEX1-PEX6 AAA ATPase complex, which is composed of a heterohexamer formed by a trimer of PEX1-PEX6 dimers.

It localises to the cytoplasm. Its subcellular location is the cytosol. The protein localises to the peroxisome membrane. It carries out the reaction ATP + H2O = ADP + phosphate + H(+). Its function is as follows. Component of the PEX1-PEX6 AAA ATPase complex, a protein dislocase complex that mediates the ATP-dependent extraction of the PEX5 receptor from peroxisomal membranes, an essential step for PEX5 recycling. Specifically recognizes PEX5 monoubiquitinated at 'Cys-6', and pulls it out of the peroxisome lumen through the PEX2-PEX10-PEX12 retrotranslocation channel. Extraction by the PEX1-PEX6 AAA ATPase complex is accompanied by unfolding of the TPR repeats and release of bound cargo from PEX5. The sequence is that of Peroxisomal ATPase PEX6 (PEX6) from Kluyveromyces lactis (strain ATCC 8585 / CBS 2359 / DSM 70799 / NBRC 1267 / NRRL Y-1140 / WM37) (Yeast).